The primary structure comprises 175 residues: Glutamyl-tRNA(Gln) amidotransferase subunit C, mitochondrial (175 aa).

The protein belongs to the GatC family. Subunit of the heterotrimeric GatCAB amidotransferase (AdT) complex, composed of A, B and C subunits.

The protein resides in the mitochondrion. The enzyme catalyses L-glutamyl-tRNA(Gln) + L-glutamine + ATP + H2O = L-glutaminyl-tRNA(Gln) + L-glutamate + ADP + phosphate + H(+). Functionally, allows the formation of correctly charged Gln-tRNA(Gln) through the transamidation of misacylated Glu-tRNA(Gln) in the mitochondria. The reaction takes place in the presence of glutamine and ATP through an activated gamma-phospho-Glu-tRNA(Gln). This is Glutamyl-tRNA(Gln) amidotransferase subunit C, mitochondrial from Caenorhabditis elegans.